Here is a 96-residue protein sequence, read N- to C-terminus: Co-chaperonin GroES (96 aa).

Belongs to the GroES chaperonin family. Heptamer of 7 subunits arranged in a ring. Interacts with the chaperonin GroEL.

It is found in the cytoplasm. Together with the chaperonin GroEL, plays an essential role in assisting protein folding. The GroEL-GroES system forms a nano-cage that allows encapsulation of the non-native substrate proteins and provides a physical environment optimized to promote and accelerate protein folding. GroES binds to the apical surface of the GroEL ring, thereby capping the opening of the GroEL channel. The polypeptide is Co-chaperonin GroES (Wolbachia sp. subsp. Drosophila simulans (strain wRi)).